The chain runs to 412 residues: Phytoene synthase, chloroplastic (412 aa).

Belongs to the phytoene/squalene synthase family. As to quaternary structure, monomer. In terms of tissue distribution, expressed in roots, leaves, flower buds, sepals, petals, lips and lip crests.

It is found in the plastid. It localises to the chloroplast. It catalyses the reaction 2 (2E,6E,10E)-geranylgeranyl diphosphate = 15-cis-phytoene + 2 diphosphate. It participates in carotenoid biosynthesis; phytoene biosynthesis; all-trans-phytoene from geranylgeranyl diphosphate: step 1/1. Catalyzes the reaction from prephytoene diphosphate to phytoene. This Oncidium hybrid cultivar (Orchid) protein is Phytoene synthase, chloroplastic (PSY).